The sequence spans 240 residues: Probable transcriptional regulatory protein SO_3401 (240 aa).

This sequence belongs to the TACO1 family.

The protein resides in the cytoplasm. In Shewanella oneidensis (strain ATCC 700550 / JCM 31522 / CIP 106686 / LMG 19005 / NCIMB 14063 / MR-1), this protein is Probable transcriptional regulatory protein SO_3401.